A 278-amino-acid polypeptide reads, in one-letter code: Tryptophan 2,3-dioxygenase (278 aa).

Residues 47–51 (FIVQH), tyrosine 109, and arginine 113 contribute to the substrate site. A heme-binding site is contributed by histidine 236. Threonine 250 is a substrate binding site.

The protein belongs to the tryptophan 2,3-dioxygenase family. As to quaternary structure, homotetramer. Heme serves as cofactor.

The enzyme catalyses L-tryptophan + O2 = N-formyl-L-kynurenine. It participates in amino-acid degradation; L-tryptophan degradation via kynurenine pathway; L-kynurenine from L-tryptophan: step 1/2. Functionally, heme-dependent dioxygenase that catalyzes the oxidative cleavage of the L-tryptophan (L-Trp) pyrrole ring and converts L-tryptophan to N-formyl-L-kynurenine. Catalyzes the oxidative cleavage of the indole moiety. The sequence is that of Tryptophan 2,3-dioxygenase from Ralstonia pickettii (strain 12J).